The sequence spans 169 residues: Ribosome maturation factor RimM (169 aa).

Positions 97-169 (EDEVYFKDLI…KIVVDWEYDY (73 aa)) constitute a PRC barrel domain.

The protein belongs to the RimM family. As to quaternary structure, binds ribosomal protein uS19.

The protein resides in the cytoplasm. Its function is as follows. An accessory protein needed during the final step in the assembly of 30S ribosomal subunit, possibly for assembly of the head region. Essential for efficient processing of 16S rRNA. May be needed both before and after RbfA during the maturation of 16S rRNA. It has affinity for free ribosomal 30S subunits but not for 70S ribosomes. The protein is Ribosome maturation factor RimM of Francisella tularensis subsp. holarctica (strain FTNF002-00 / FTA).